The sequence spans 444 residues: MSERKYFGTDGIRGKVGESPITPDFVLKLGFAAGKVLARHGSKQIIIGKDTRISGYMLESALEAGLAAAGLSAAFTGPMPTPAVAYLTRTFRAEAGIVISASHNPFDDNGIKFFSTEGTKLPDDVEAAIEAEMEKPITCVESAALGRASRIVDAAGRYIEFCKGTFPSQLSLNGLKIVVDCANGATYHIAPNVLRELGATVISIGVQPDGMNINKECGATDLRLLQERVLAEKADVGLAYDGDGDRIMMVDHLGHKVDGDQILYLIAREGLRQGELRGGVVGTLMSNMGLELALKQLGIPFARAKVGDRYVLEKLKEKGWRLGAENSGHVILLDKTTTGDGIVAGLQVLTAMVRNHMSLHDLCSGMKLLPQILVNVRFSGSSDPLEDARVKAVTAEAEIELKGRGRVLLRKSGTEPLIRVMVEGEDEALVSTLANRIADAVKAV.

The Phosphoserine intermediate role is filled by serine 102. Mg(2+)-binding residues include serine 102, aspartate 241, aspartate 243, and aspartate 245. Serine 102 is modified (phosphoserine).

Belongs to the phosphohexose mutase family. Mg(2+) serves as cofactor. In terms of processing, activated by phosphorylation.

It catalyses the reaction alpha-D-glucosamine 1-phosphate = D-glucosamine 6-phosphate. Functionally, catalyzes the conversion of glucosamine-6-phosphate to glucosamine-1-phosphate. In Erwinia tasmaniensis (strain DSM 17950 / CFBP 7177 / CIP 109463 / NCPPB 4357 / Et1/99), this protein is Phosphoglucosamine mutase.